A 250-amino-acid polypeptide reads, in one-letter code: 5'-nucleotidase SurE (250 aa).

A divalent metal cation is bound by residues D8, D9, S39, and N95.

It belongs to the SurE nucleotidase family. Requires a divalent metal cation as cofactor.

It is found in the cytoplasm. The catalysed reaction is a ribonucleoside 5'-phosphate + H2O = a ribonucleoside + phosphate. In terms of biological role, nucleotidase that shows phosphatase activity on nucleoside 5'-monophosphates. The polypeptide is 5'-nucleotidase SurE (Cupriavidus pinatubonensis (strain JMP 134 / LMG 1197) (Cupriavidus necator (strain JMP 134))).